A 439-amino-acid polypeptide reads, in one-letter code: 23S rRNA (uracil(1939)-C(5))-methyltransferase RlmD (439 aa).

The 60-residue stretch at 10 to 69 (KTQLNTRHQAVQVERLDHHGAGIAYLKKKPLFIDGALPGEEVVTQLVEEKSKFARGKLIK) folds into the TRAM domain. Positions 82, 88, 91, and 169 each coordinate [4Fe-4S] cluster. Gln272, Phe301, Asn306, Glu322, Asn349, and Asp370 together coordinate S-adenosyl-L-methionine. Catalysis depends on Cys396, which acts as the Nucleophile.

It belongs to the class I-like SAM-binding methyltransferase superfamily. RNA M5U methyltransferase family. RlmD subfamily.

The catalysed reaction is uridine(1939) in 23S rRNA + S-adenosyl-L-methionine = 5-methyluridine(1939) in 23S rRNA + S-adenosyl-L-homocysteine + H(+). Functionally, catalyzes the formation of 5-methyl-uridine at position 1939 (m5U1939) in 23S rRNA. This is 23S rRNA (uracil(1939)-C(5))-methyltransferase RlmD from Vibrio campbellii (strain ATCC BAA-1116).